A 270-amino-acid chain; its full sequence is tRNA pseudouridine synthase A (270 aa).

The Nucleophile role is filled by Asp60. The RNA binding stretch occupies residues 107–111 (FHARF). Tyr118 lines the substrate pocket. Positions 168–172 (QCQSR) are interaction with tRNA.

Belongs to the tRNA pseudouridine synthase TruA family. In terms of assembly, homodimer.

It carries out the reaction uridine(38/39/40) in tRNA = pseudouridine(38/39/40) in tRNA. Functionally, formation of pseudouridine at positions 38, 39 and 40 in the anticodon stem and loop of transfer RNAs. The protein is tRNA pseudouridine synthase A of Enterobacter sp. (strain 638).